Reading from the N-terminus, the 432-residue chain is Eukaryotic translation initiation factor 3 subunit M (432 aa).

Positions 184 to 356 constitute a PCI domain; that stretch reads EEEEAYQHIL…KVFLIHSVRY (173 aa). 2 stretches are compositionally biased toward basic and acidic residues: residues 392–401 and 423–432; these read AQQEAERKLV and QHRERNDNDD. Positions 392–432 are disordered; it reads AQQEAERKLVEASTQHNNDRGNQRRGGNRGQQHRERNDNDD.

Belongs to the eIF-3 subunit M family. Component of the eukaryotic translation initiation factor 3 (eIF-3) complex.

The protein localises to the cytoplasm. In terms of biological role, component of the eukaryotic translation initiation factor 3 (eIF-3) complex, which is involved in protein synthesis of a specialized repertoire of mRNAs and, together with other initiation factors, stimulates binding of mRNA and methionyl-tRNAi to the 40S ribosome. The eIF-3 complex specifically targets and initiates translation of a subset of mRNAs involved in cell proliferation. In Pyricularia oryzae (strain 70-15 / ATCC MYA-4617 / FGSC 8958) (Rice blast fungus), this protein is Eukaryotic translation initiation factor 3 subunit M.